We begin with the raw amino-acid sequence, 251 residues long: Pyrroloquinoline-quinone synthase (251 aa).

It belongs to the PqqC family.

The enzyme catalyses 6-(2-amino-2-carboxyethyl)-7,8-dioxo-1,2,3,4,7,8-hexahydroquinoline-2,4-dicarboxylate + 3 O2 = pyrroloquinoline quinone + 2 H2O2 + 2 H2O + H(+). It functions in the pathway cofactor biosynthesis; pyrroloquinoline quinone biosynthesis. Its function is as follows. Ring cyclization and eight-electron oxidation of 3a-(2-amino-2-carboxyethyl)-4,5-dioxo-4,5,6,7,8,9-hexahydroquinoline-7,9-dicarboxylic-acid to PQQ. The protein is Pyrroloquinoline-quinone synthase of Klebsiella pneumoniae (strain 342).